A 229-amino-acid chain; its full sequence is UPF0758 protein Moth_0536 (229 aa).

In terms of domain architecture, MPN spans 107-229; that stretch reads VIRNPRDVAG…FTSLKERNLL (123 aa). Zn(2+)-binding residues include His178, His180, and Asp191. The short motif at 178-191 is the JAMM motif element; the sequence is HNHPSGDPTPSQED.

Belongs to the UPF0758 family.

The chain is UPF0758 protein Moth_0536 from Moorella thermoacetica (strain ATCC 39073 / JCM 9320).